We begin with the raw amino-acid sequence, 72 residues long: Large ribosomal subunit protein bL31 (72 aa).

Positions 17, 19, 37, and 40 each coordinate Zn(2+).

It belongs to the bacterial ribosomal protein bL31 family. Type A subfamily. Part of the 50S ribosomal subunit. Zn(2+) serves as cofactor.

In terms of biological role, binds the 23S rRNA. The chain is Large ribosomal subunit protein bL31 from Clostridium botulinum (strain Loch Maree / Type A3).